Here is a 458-residue protein sequence, read N- to C-terminus: Sushi repeat-containing protein SRPX2 (458 aa).

The N-terminal stretch at 1–18 (MEASITVLLFAFTKVASS) is a signal peptide. Sushi domains follow at residues 62–112 (ATCY…HCRR), 113–171 (IQCH…VCVD), and 255–314 (RRCP…TCTP). Cystine bridges form between Cys64-Cys98, Cys84-Cys110, Cys115-Cys156, and Cys142-Cys169. Positions 170-254 (VDLDPPKIQC…SCKFIVKVQV (85 aa)) constitute an HYR domain. 2 disulfides stabilise this stretch: Cys257-Cys299 and Cys285-Cys312.

In terms of assembly, forms homooligomers.

The protein resides in the secreted. The protein localises to the cytoplasm. Its subcellular location is the cell surface. It is found in the synapse. Functionally, may play a role in angiogenesis, synapse formation, cellular migration and adhesion. In Xenopus laevis (African clawed frog), this protein is Sushi repeat-containing protein SRPX2 (srpx2).